Here is a 445-residue protein sequence, read N- to C-terminus: Phosphoglucosamine mutase (445 aa).

The Phosphoserine intermediate role is filled by Ser-101. Residues Ser-101, Asp-240, Asp-242, and Asp-244 each coordinate Mg(2+). Ser-101 is subject to Phosphoserine.

The protein belongs to the phosphohexose mutase family. The cofactor is Mg(2+). Post-translationally, activated by phosphorylation.

The catalysed reaction is alpha-D-glucosamine 1-phosphate = D-glucosamine 6-phosphate. In terms of biological role, catalyzes the conversion of glucosamine-6-phosphate to glucosamine-1-phosphate. The sequence is that of Phosphoglucosamine mutase from Pseudomonas aeruginosa (strain LESB58).